The sequence spans 288 residues: Light-independent protochlorophyllide reductase iron-sulfur ATP-binding protein (288 aa).

Residues 12–17 and K41 each bind ATP; that span reads GIGKST. S16 is a binding site for Mg(2+). Residues C97 and C131 each coordinate [4Fe-4S] cluster. 182 to 183 lines the ATP pocket; sequence NR.

The protein belongs to the NifH/BchL/ChlL family. As to quaternary structure, homodimer. Protochlorophyllide reductase is composed of three subunits; ChlL, ChlN and ChlB. [4Fe-4S] cluster serves as cofactor.

The enzyme catalyses chlorophyllide a + oxidized 2[4Fe-4S]-[ferredoxin] + 2 ADP + 2 phosphate = protochlorophyllide a + reduced 2[4Fe-4S]-[ferredoxin] + 2 ATP + 2 H2O. The protein operates within porphyrin-containing compound metabolism; chlorophyll biosynthesis (light-independent). Its function is as follows. Component of the dark-operative protochlorophyllide reductase (DPOR) that uses Mg-ATP and reduced ferredoxin to reduce ring D of protochlorophyllide (Pchlide) to form chlorophyllide a (Chlide). This reaction is light-independent. The L component serves as a unique electron donor to the NB-component of the complex, and binds Mg-ATP. This Picosynechococcus sp. (strain ATCC 27264 / PCC 7002 / PR-6) (Agmenellum quadruplicatum) protein is Light-independent protochlorophyllide reductase iron-sulfur ATP-binding protein.